The following is a 1040-amino-acid chain: Activated CDC42 kinase 1 (1040 aa).

The SAM-like domain stretch occupies residues 1–110 (MQPEEGTGWL…PSPTPGGLAG (110 aa)). Positions 86-109 (EAEFPSHHSQSTFRKPSPTPGGLA) are disordered. T113 is subject to Phosphothreonine. In terms of domain architecture, Protein kinase spans 126-385 (LRLLEKLGDG…PTFVALRDFL (260 aa)). ATP contacts are provided by residues 132–140 (LGDGSFGVV) and K158. D252 serves as the catalytic Proton acceptor. Residue Y284 is modified to Phosphotyrosine; by SRC and autocatalysis. An SH3 domain is found at 388 to 448 (AQPTDMRALQ…PRNVVTSVAG (61 aa)). Positions 505–527 (RPTQHLGRMKKPTYDPVSEDPDP) are disordered. Position 518 is a phosphotyrosine (Y518). Positions 623–652 (DWDARPLPPPPAYDDVAQDEDDFEVCSINS) are required for interaction with SRC. The interval 632-635 (PPAY) is required for interaction with NEDD4. The interval 722–824 (TGQLTPSPTP…MPTTQSFASD (103 aa)) is disordered. The segment at 733 to 876 (GDDKPQVPPR…PYLERYQRFL (144 aa)) is EBD domain. Composition is skewed to pro residues over residues 738–749 (QVPPRVPIPPRP) and 772–783 (PSSPPRVPPREP). The segment covering 802 to 812 (PLPHRLSSSPG) has biased composition (low complexity). Y827 carries the phosphotyrosine modification. R839 bears the Omega-N-methylarginine mark. Residues Y859 and Y872 each carry the phosphotyrosine modification. Phosphoserine is present on S881. The disordered stretch occupies residues 881–957 (SPEEPAALPV…CPGDGQEAAR (77 aa)). The segment covering 888-903 (LPVPPLLPPPSTPAPA) has biased composition (pro residues). A compositionally biased stretch (polar residues) spans 922–931 (NFSTNNSNPG). The 41-residue stretch at 958–998 (PADKVQMLQAMVHGVTTEECQAALRSHSWSIQRAAQYLKVE) folds into the UBA domain.

Belongs to the protein kinase superfamily. Tyr protein kinase family. In terms of assembly, homodimer. Interacts with CDC42. Interacts with CSPG4 (activated). Interacts with MERTK (activated); stimulates autophosphorylation. May interact (phosphorylated) with HSP90AB1; maintains kinase activity. Interacts with NPHP1. Interacts with SNX9 (via SH3 domain). Interacts with SRC (via SH2 and SH3 domain). Interacts with EGFR, and this interaction is dependent on EGF stimulation and kinase activity of EGFR. Interacts (via kinase domain) with AKT1. Part of a collagen stimulated complex involved in cell migration composed of CDC42, CRK, TNK2 and BCAR1/p130cas. Interacts with BCAR1/p130cas via SH3 domains. Forms complexes with GRB2 and numerous receptor tyrosine kinases (RTK) including LTK, AXL or PDGFRL, in which GRB2 promotes RTK recruitment by TNK2. Interacts with NEDD4 (via WW3 domain). NEDD4L and EGF promote association with NEDD4. The cofactor is Mg(2+). Post-translationally, autophosphorylation regulates kinase activity. Phosphorylation on Tyr-518 is required for interaction with SRC and is observed during association with clathrin-coated pits. In terms of processing, polyubiquitinated by NEDD4 and NEDD4L. Degradation can be induced by EGF and is lysosome-dependent.

The protein localises to the cell membrane. It localises to the nucleus. Its subcellular location is the endosome. It is found in the cell junction. The protein resides in the adherens junction. The protein localises to the cytoplasmic vesicle membrane. It localises to the cytoplasmic vesicle. Its subcellular location is the clathrin-coated vesicle. It is found in the membrane. The protein resides in the clathrin-coated pit. The protein localises to the cytoplasm. It localises to the cytosol. It catalyses the reaction L-tyrosyl-[protein] + ATP = O-phospho-L-tyrosyl-[protein] + ADP + H(+). The catalysed reaction is L-seryl-[protein] + ATP = O-phospho-L-seryl-[protein] + ADP + H(+). The enzyme catalyses L-threonyl-[protein] + ATP = O-phospho-L-threonyl-[protein] + ADP + H(+). Its function is as follows. Non-receptor tyrosine-protein and serine/threonine-protein kinase that is implicated in cell spreading and migration, cell survival, cell growth and proliferation. Transduces extracellular signals to cytosolic and nuclear effectors. Phosphorylates AKT1, AR, MCF2, WASL and WWOX. Implicated in trafficking and clathrin-mediated endocytosis through binding to epidermal growth factor receptor (EGFR) and clathrin. Binds to both poly- and mono-ubiquitin and regulates ligand-induced degradation of EGFR, thereby contributing to the accumulation of EGFR at the limiting membrane of early endosomes. Downstream effector of CDC42 which mediates CDC42-dependent cell migration via phosphorylation of BCAR1. May be involved both in adult synaptic function and plasticity and in brain development. Activates AKT1 by phosphorylating it on 'Tyr-176'. Phosphorylates AR on 'Tyr-267' and 'Tyr-363', thereby promoting its recruitment to androgen-responsive enhancers (AREs). Phosphorylates WWOX on 'Tyr-287'. Phosphorylates MCF2, thereby enhancing its activity as a guanine nucleotide exchange factor (GEF) toward Rho family proteins. Contributes to the control of AXL receptor levels. Confers metastatic properties on cancer cells and promotes tumor growth by negatively regulating tumor suppressor such as WWOX and positively regulating pro-survival factors such as AKT1 and AR. This chain is Activated CDC42 kinase 1, found in Rattus norvegicus (Rat).